The primary structure comprises 170 residues: Bacilliredoxin SRU_1493 (170 aa).

Positions 140 to 170 (CGDEEPPADAPSRPDPSSSGEGLPSTFQSIT) are disordered.

Belongs to the bacilliredoxin family.

This chain is Bacilliredoxin SRU_1493, found in Salinibacter ruber (strain DSM 13855 / M31).